We begin with the raw amino-acid sequence, 530 residues long: MGIKKMFQKKEPTEQEIREELSRVGISTRSNNTRQEKFGAFKNYAQERANMKPQLGPVGGNPYANINPGTNNNNNNPYANDNGNNSTGNPNNNSNSNNGGNPYGGGVTNNNPYGGSGGNGRGSSPSPYAPTTSTTTRSSNPYGNNNGSRSSQNTSSPYAKSTNNSSYSNSPYSGSTVNNGNRGGHSNNSNSSAGGNPYAAGGRSSQSQNSRDNVYTAPATRTSTRQTQGYGGGDTDSTLDLNAIPSHQMFDNKKPIKRNQQSSQQPANDYNLDLNDEYGEEEDLNLDISEVPEEQQQINSEDEEVEAIKQDIKFVKQESVQSTRNTLRMAQEADASGTNTLGMLGSQSERLYNAEQNLLLAETQTQIADEKVKELKRLNRSIFIPANGNPFNKKSRLRQQEEKIKNQKLQEKYIRENNRQEMFASEQRIKQGITNNSTNNDVYNKYQDEKNLSAAKRYQFENDSEDDDMEKEIASNLNQIDQYAKKLKGLANTMGTEVDNQNTRLKKIEESADKLDINVHMNTTRLNNIR.

A disordered region spans residues 1–274 (MGIKKMFQKK…QPANDYNLDL (274 aa)). The segment covering 8–22 (QKKEPTEQEIREELS) has biased composition (basic and acidic residues). 2 stretches are compositionally biased toward low complexity: residues 61-100 (NPYANINPGTNNNNNNPYANDNGNNSTGNPNNNSNSNNGG) and 122-141 (GSSPSPYAPTTSTTTRSSNP). A compositionally biased stretch (polar residues) spans 142 to 160 (YGNNNGSRSSQNTSSPYAK). A compositionally biased stretch (low complexity) spans 161–202 (STNNSSYSNSPYSGSTVNNGNRGGHSNNSNSSAGGNPYAAGG). Polar residues-rich tracts occupy residues 203-228 (RSSQSQNSRDNVYTAPATRTSTRQTQ) and 258-268 (RNQQSSQQPAN). 2 consecutive t-SNARE coiled-coil homology domains span residues 313-375 (KFVK…VKEL) and 467-529 (DDME…LNNI).

It belongs to the SNAP-25 family.

It localises to the membrane. Late secretory t-SNARE protein required for secretion and proper cytokinesis. Plays an important role in the secretion of virulence-associated extracellular enzymes and vesicle-mediated polarized hyphal growth. The chain is Protein transport protein SEC9 (SEC9) from Candida albicans (strain SC5314 / ATCC MYA-2876) (Yeast).